Here is a 417-residue protein sequence, read N- to C-terminus: MFSFEKNSLKNTDKEIFDAIELEVKRQHEHVELIASENYASPAVMEAQGSQLTNKYAEGYHGKRYYGGCEFVDIAEKLAIERAQQLFGVDYANVQPHSGSQANAAVYNAVLKPGDTVLGMDLGAGGHLTHGSKVNFSGKIYNSIQYGLDENGDIDYEQVAQLAKEHKPKMIIAGFSAFSGIINWQKFREIADSVDAVLMADIAHVAGLVAAGVYPNPFPYVYVATTTTHKTLRGPRGGLILCNNNPELAKKFQSAIFPGIQGGPLMHVIAAKAVAFKEALEPSFVDYQKQVLKNAKAMEKVLKQRGINIISGGTSNHLLLLDITNTGFSGKEAEAALGRANITVNKNSIPNDPRSPFVTSGLRIGSPAITTRGFKEKECELVANLLADVVFNCGDEKVENETAAKVLDLCDKFPVYK.

(6S)-5,6,7,8-tetrahydrofolate-binding positions include L122 and 126-128 (GHL). K230 is modified (N6-(pyridoxal phosphate)lysine). 355 to 357 (SPF) contacts (6S)-5,6,7,8-tetrahydrofolate.

It belongs to the SHMT family. In terms of assembly, homodimer. The cofactor is pyridoxal 5'-phosphate.

The protein resides in the cytoplasm. It carries out the reaction (6R)-5,10-methylene-5,6,7,8-tetrahydrofolate + glycine + H2O = (6S)-5,6,7,8-tetrahydrofolate + L-serine. It functions in the pathway one-carbon metabolism; tetrahydrofolate interconversion. The protein operates within amino-acid biosynthesis; glycine biosynthesis; glycine from L-serine: step 1/1. Catalyzes the reversible interconversion of serine and glycine with tetrahydrofolate (THF) serving as the one-carbon carrier. This reaction serves as the major source of one-carbon groups required for the biosynthesis of purines, thymidylate, methionine, and other important biomolecules. Also exhibits THF-independent aldolase activity toward beta-hydroxyamino acids, producing glycine and aldehydes, via a retro-aldol mechanism. The polypeptide is Serine hydroxymethyltransferase (Francisella tularensis subsp. mediasiatica (strain FSC147)).